Consider the following 255-residue polypeptide: Phosphate import ATP-binding protein PstB (255 aa).

Residues 9–250 form the ABC transporter domain; that stretch reads MYAQGLQFYY…PRNKQTEDYI (242 aa). An ATP-binding site is contributed by 41 to 48; the sequence is GPSGCGKS.

Belongs to the ABC transporter superfamily. Phosphate importer (TC 3.A.1.7) family. As to quaternary structure, the complex is composed of two ATP-binding proteins (PstB), two transmembrane proteins (PstC and PstA) and a solute-binding protein (PstS).

It localises to the cell inner membrane. The enzyme catalyses phosphate(out) + ATP + H2O = ADP + 2 phosphate(in) + H(+). Part of the ABC transporter complex PstSACB involved in phosphate import. Responsible for energy coupling to the transport system. The protein is Phosphate import ATP-binding protein PstB of Nitratidesulfovibrio vulgaris (strain ATCC 29579 / DSM 644 / CCUG 34227 / NCIMB 8303 / VKM B-1760 / Hildenborough) (Desulfovibrio vulgaris).